We begin with the raw amino-acid sequence, 418 residues long: Glutamyl-tRNA reductase (418 aa).

Substrate is bound by residues 49–52 (TCNR), Ser109, 114–116 (EPQ), and Gln120. Cys50 (nucleophile) is an active-site residue. 189-194 (GAGETI) contacts NADP(+).

This sequence belongs to the glutamyl-tRNA reductase family. Homodimer.

It carries out the reaction (S)-4-amino-5-oxopentanoate + tRNA(Glu) + NADP(+) = L-glutamyl-tRNA(Glu) + NADPH + H(+). Its pathway is porphyrin-containing compound metabolism; protoporphyrin-IX biosynthesis; 5-aminolevulinate from L-glutamyl-tRNA(Glu): step 1/2. Catalyzes the NADPH-dependent reduction of glutamyl-tRNA(Glu) to glutamate 1-semialdehyde (GSA). This chain is Glutamyl-tRNA reductase, found in Salmonella dublin (strain CT_02021853).